The primary structure comprises 153 residues: Large ribosomal subunit protein eL15 (153 aa).

Residue Lys32 forms a Glycyl lysine isopeptide (Lys-Gly) (interchain with G-Cter in SUMO2) linkage. 2 positions are modified to phosphoserine: Ser46 and Ser49. A disordered region spans residues 114–135 (TSAGRKSRGLGKGHKFHHTIGG). The span at 118-131 (RKSRGLGKGHKFHH) shows a compositional bias: basic residues.

Belongs to the eukaryotic ribosomal protein eL15 family. As to quaternary structure, component of the large ribosomal subunit. Interacts with IFIT1 (via TPR repeats 1-4).

The protein resides in the cytoplasm. Its function is as follows. Component of the large ribosomal subunit. The ribosome is a large ribonucleoprotein complex responsible for the synthesis of proteins in the cell. The polypeptide is Large ribosomal subunit protein eL15 (RPL15) (Sus scrofa (Pig)).